The primary structure comprises 195 residues: Large ribosomal subunit protein mL58 (195 aa).

A mitochondrion-targeting transit peptide spans 1 to 18 (MIGRGVCCRSFHTAGSAW).

The protein belongs to the mitochondrion-specific ribosomal protein mL58 family. As to quaternary structure, component of the mitochondrial large ribosomal subunit (mt-LSU). Mature yeast 74S mitochondrial ribosomes consist of a small (37S) and a large (54S) subunit. The 37S small subunit contains a 15S ribosomal RNA (15S mt-rRNA) and 34 different proteins. The 54S large subunit contains a 21S rRNA (21S mt-rRNA) and 46 different proteins.

The protein localises to the mitochondrion. Component of the mitochondrial ribosome (mitoribosome), a dedicated translation machinery responsible for the synthesis of mitochondrial genome-encoded proteins, including at least some of the essential transmembrane subunits of the mitochondrial respiratory chain. The mitoribosomes are attached to the mitochondrial inner membrane and translation products are cotranslationally integrated into the membrane. The chain is Large ribosomal subunit protein mL58 (MRPL20) from Saccharomyces cerevisiae (strain ATCC 204508 / S288c) (Baker's yeast).